The chain runs to 281 residues: Elongation factor Ts (281 aa).

Positions 79-82 (TDFV) are involved in Mg(2+) ion dislocation from EF-Tu.

It belongs to the EF-Ts family.

It is found in the cytoplasm. In terms of biological role, associates with the EF-Tu.GDP complex and induces the exchange of GDP to GTP. It remains bound to the aminoacyl-tRNA.EF-Tu.GTP complex up to the GTP hydrolysis stage on the ribosome. The polypeptide is Elongation factor Ts (Wolbachia pipientis subsp. Culex pipiens (strain wPip)).